Here is a 348-residue protein sequence, read N- to C-terminus: Protein pelota homolog (348 aa).

This sequence belongs to the eukaryotic release factor 1 family. Pelota subfamily. In terms of assembly, monomer. A divalent metal cation is required as a cofactor.

Its subcellular location is the cytoplasm. Its function is as follows. May function in recognizing stalled ribosomes, interact with stem-loop structures in stalled mRNA molecules, and effect endonucleolytic cleavage of the mRNA. May play a role in the release non-functional ribosomes and degradation of damaged mRNAs. Has endoribonuclease activity. The polypeptide is Protein pelota homolog (Methanococcus maripaludis (strain C6 / ATCC BAA-1332)).